The following is an 814-amino-acid chain: DNA gyrase subunit A (814 aa).

In terms of domain architecture, Topo IIA-type catalytic spans 32–499 (LPDVRDGLKP…GVIEFREEDL (468 aa)). Tyrosine 120 (O-(5'-phospho-DNA)-tyrosine intermediate) is an active-site residue. A GyrA-box motif is present at residues 526–532 (QHRAGRG).

It belongs to the type II topoisomerase GyrA/ParC subunit family. Heterotetramer, composed of two GyrA and two GyrB chains. In the heterotetramer, GyrA contains the active site tyrosine that forms a transient covalent intermediate with DNA, while GyrB binds cofactors and catalyzes ATP hydrolysis.

Its subcellular location is the cytoplasm. It carries out the reaction ATP-dependent breakage, passage and rejoining of double-stranded DNA.. In terms of biological role, a type II topoisomerase that negatively supercoils closed circular double-stranded (ds) DNA in an ATP-dependent manner to modulate DNA topology and maintain chromosomes in an underwound state. Negative supercoiling favors strand separation, and DNA replication, transcription, recombination and repair, all of which involve strand separation. Also able to catalyze the interconversion of other topological isomers of dsDNA rings, including catenanes and knotted rings. Type II topoisomerases break and join 2 DNA strands simultaneously in an ATP-dependent manner. The sequence is that of DNA gyrase subunit A from Dehalogenimonas lykanthroporepellens (strain ATCC BAA-1523 / JCM 15061 / BL-DC-9).